The sequence spans 134 residues: Small ribosomal subunit protein uS8c (134 aa).

This sequence belongs to the universal ribosomal protein uS8 family. Part of the 30S ribosomal subunit.

Its subcellular location is the plastid. It localises to the chloroplast. In terms of biological role, one of the primary rRNA binding proteins, it binds directly to 16S rRNA central domain where it helps coordinate assembly of the platform of the 30S subunit. The sequence is that of Small ribosomal subunit protein uS8c (rps8) from Panax ginseng (Korean ginseng).